We begin with the raw amino-acid sequence, 482 residues long: Putative dipeptidase NECHADRAFT_87110 (482 aa).

Residues 1–21 (MADTQTPNLQNTAEGDANTSA) show a composition bias toward polar residues. The tract at residues 1–24 (MADTQTPNLQNTAEGDANTSAENE) is disordered. Asn18 is a glycosylation site (N-linked (GlcNAc...) asparagine). Residues 41-61 (WLRYPFLVAGIALFLGPFSFF) traverse the membrane as a helical segment. Zn(2+) is bound by residues His90, Asp92, and Glu201. A disulfide bridge connects residues Cys141 and Cys230. His228 provides a ligand contact to substrate. Zn(2+)-binding residues include His272 and His293. The substrate site is built by Arg304 and Asp364.

The protein belongs to the metallo-dependent hydrolases superfamily. Peptidase M19 family. It depends on Zn(2+) as a cofactor.

It is found in the membrane. It catalyses the reaction an L-aminoacyl-L-amino acid + H2O = 2 an L-alpha-amino acid. Functionally, hydrolyzes a wide range of dipeptides. This Fusarium vanettenii (strain ATCC MYA-4622 / CBS 123669 / FGSC 9596 / NRRL 45880 / 77-13-4) (Fusarium solani subsp. pisi) protein is Putative dipeptidase NECHADRAFT_87110.